A 350-amino-acid polypeptide reads, in one-letter code: Protein RecA (350 aa).

Residue glycine 65–threonine 72 participates in ATP binding. Residues alanine 329–isoleucine 350 are disordered. Positions threonine 341–isoleucine 350 are enriched in acidic residues.

It belongs to the RecA family.

Its subcellular location is the cytoplasm. Functionally, can catalyze the hydrolysis of ATP in the presence of single-stranded DNA, the ATP-dependent uptake of single-stranded DNA by duplex DNA, and the ATP-dependent hybridization of homologous single-stranded DNAs. It interacts with LexA causing its activation and leading to its autocatalytic cleavage. In Pseudomonas fluorescens (strain ATCC BAA-477 / NRRL B-23932 / Pf-5), this protein is Protein RecA.